Consider the following 388-residue polypeptide: Putative 8-amino-7-oxononanoate synthase (388 aa).

R22 serves as a coordination point for substrate. 109–110 lines the pyridoxal 5'-phosphate pocket; that stretch reads GY. Residue H134 coordinates substrate. Pyridoxal 5'-phosphate is bound by residues S182, 207-210, and 237-240; these read DEAH and TLSK. The residue at position 240 (K240) is an N6-(pyridoxal phosphate)lysine. T354 provides a ligand contact to substrate.

The protein belongs to the class-II pyridoxal-phosphate-dependent aminotransferase family. BioF subfamily. As to quaternary structure, homodimer. Requires pyridoxal 5'-phosphate as cofactor.

The catalysed reaction is 6-carboxyhexanoyl-[ACP] + L-alanine + H(+) = (8S)-8-amino-7-oxononanoate + holo-[ACP] + CO2. Its pathway is cofactor biosynthesis; biotin biosynthesis. Catalyzes the decarboxylative condensation of pimeloyl-[acyl-carrier protein] and L-alanine to produce 8-amino-7-oxononanoate (AON), [acyl-carrier protein], and carbon dioxide. The sequence is that of Putative 8-amino-7-oxononanoate synthase (bioF) from Gloeobacter violaceus (strain ATCC 29082 / PCC 7421).